We begin with the raw amino-acid sequence, 847 residues long: Guanine nucleotide exchange factor VAV3 (847 aa).

A Calponin-homology (CH) domain is found at 1 to 119 (MEPWKQCAQW…ETLSRLSRTP (119 aa)). Tyr141 is modified (phosphotyrosine). A DH domain is found at 192–371 (IRSCCLAEIK…KDLAQYVNEV (180 aa)). The PH domain occupies 400–502 (RPQGDGEIRI…WLEQFEMALS (103 aa)). The Phorbol-ester/DAG-type zinc finger occupies 513–562 (FHDFKMHTFTRVTSCKVCQMLLRGTFYQGYLCFKCGARAHKECLGRVDNC). Positions 560 to 847 (DNCGRVNSGE…FPSTYVEEDE (288 aa)) are sufficient for interaction with ROS1. Residues 592–660 (PGLPKMQVIR…PSDAVKPCPC (69 aa)) form the SH3 1 domain. An SH2 domain is found at 672 to 766 (WYAGAMERLQ…TLDTTLQFPY (95 aa)). The region spanning 788–847 (KVLGIAIARYDFCARDMRELSLLKGDVVKIYTKMSANGWWRGEVNGRVGWFPSTYVEEDE) is the SH3 2 domain.

In terms of assembly, interacts with the PH domain of SH2B2. Interacts (via SH2 domains) with the phosphorylated form of EPHA2. Interacts with ROS1; constitutive interaction that mediates VAV3 phosphorylation. In terms of processing, phosphorylated. Phosphorylation can be mediated by ROS1. In osteoclasts, undergoes tyrosine phosphorylation in response to CSF1. In terms of tissue distribution, isoform 1 and isoform 3 are widely expressed; both are expressed at very low levels in skeletal muscle. In keratinocytes, isoform 1 is less abundant than isoform 3. Isoform 3 is detected at very low levels, if any, in adrenal gland, bone marrow, spleen, fetal brain and spinal cord; in these tissues, isoform 1 is readily detectable.

Its function is as follows. Exchange factor for GTP-binding proteins RhoA, RhoG and, to a lesser extent, Rac1. Binds physically to the nucleotide-free states of those GTPases. Plays an important role in angiogenesis. Its recruitment by phosphorylated EPHA2 is critical for EFNA1-induced RAC1 GTPase activation and vascular endothelial cell migration and assembly. May be important for integrin-mediated signaling, at least in some cell types. In osteoclasts, along with SYK tyrosine kinase, required for signaling through integrin alpha-v/beta-1 (ITAGV-ITGB1), a crucial event for osteoclast proper cytoskeleton organization and function. This signaling pathway involves RAC1, but not RHO, activation. Necessary for proper wound healing. In the course of wound healing, required for the phagocytotic cup formation preceding macrophage phagocytosis of apoptotic neutrophils. Responsible for integrin beta-2 (ITGB2)-mediated macrophage adhesion and, to a lesser extent, contributes to beta-3 (ITGB3)-mediated adhesion. Does not affect integrin beta-1 (ITGB1)-mediated adhesion. This chain is Guanine nucleotide exchange factor VAV3 (VAV3), found in Homo sapiens (Human).